Consider the following 374-residue polypeptide: Transaldolase (374 aa).

Lys140 (schiff-base intermediate with substrate) is an active-site residue.

Belongs to the transaldolase family. Type 2 subfamily.

The protein resides in the cytoplasm. It carries out the reaction D-sedoheptulose 7-phosphate + D-glyceraldehyde 3-phosphate = D-erythrose 4-phosphate + beta-D-fructose 6-phosphate. The protein operates within carbohydrate degradation; pentose phosphate pathway; D-glyceraldehyde 3-phosphate and beta-D-fructose 6-phosphate from D-ribose 5-phosphate and D-xylulose 5-phosphate (non-oxidative stage): step 2/3. Its function is as follows. Transaldolase is important for the balance of metabolites in the pentose-phosphate pathway. The protein is Transaldolase of Renibacterium salmoninarum (strain ATCC 33209 / DSM 20767 / JCM 11484 / NBRC 15589 / NCIMB 2235).